A 139-amino-acid polypeptide reads, in one-letter code: Transcription antitermination protein NusB (139 aa).

It belongs to the NusB family.

In terms of biological role, involved in transcription antitermination. Required for transcription of ribosomal RNA (rRNA) genes. Binds specifically to the boxA antiterminator sequence of the ribosomal RNA (rrn) operons. This chain is Transcription antitermination protein NusB, found in Idiomarina loihiensis (strain ATCC BAA-735 / DSM 15497 / L2-TR).